A 382-amino-acid polypeptide reads, in one-letter code: MYNLPRDLPEEVLCRIPLTSLRPVRSTCKKWSTLSKCGSFAKKHLAQAKVLADAKEFMVVLMMNFRVYLMRVNLQNNVVESSSSSSSSSSSCIKREAKLISLGDEEADISQVFHCDGLLLCISITESKTRLVVWNPYWGHTRLFEPTHQFNKFDSYSYALGYDKSRKSHKILRGITCLDPFKIYDFNSDLWRDLDVTPEWHLWQMLHGVSLKGNAYWFARENYTETMDTDHFFLLCFDFTSETFGPPLPLPFEFAVSEDTMSVSSVREEQLVVLYQPWDYLQLDIWVTSKIEPNAVSWNSKVFLSVSLKQLVSPQFQLTFGSFFIDEEKKVAVVFDKDYDNKRNIAYIFGVDGSFKAVDLGDSDRKCFPLVCSYVPSLVQLN.

The 44-residue stretch at 1-44 (MYNLPRDLPEEVLCRIPLTSLRPVRSTCKKWSTLSKCGSFAKKH) folds into the F-box domain.

The protein is F-box protein At3g19470 of Arabidopsis thaliana (Mouse-ear cress).